Reading from the N-terminus, the 497-residue chain is ADP-dependent glucokinase (497 aa).

The first 22 residues, 1–22 (MALWRGSAYAGFLALAVGCVFL), serve as a signal peptide directing secretion. Residues 52-497 (SPEGRLAAAW…LFYSEVHPHL (446 aa)) form the ADPK domain. Residues Glu-297, Glu-328, and Asp-481 each coordinate Mg(2+). Asp-481 serves as the catalytic Proton acceptor.

Belongs to the ADP-dependent glucokinase family. As to quaternary structure, monomer. Requires Mg(2+) as cofactor.

The protein resides in the secreted. The enzyme catalyses D-glucose + ADP = D-glucose 6-phosphate + AMP + H(+). Its pathway is carbohydrate degradation; glycolysis. Catalyzes the phosphorylation of D-glucose to D-glucose 6-phosphate using ADP as the phosphate donor. GDP and CDP can replace ADP, but with reduced efficiency. This is ADP-dependent glucokinase (ADPGK) from Bos taurus (Bovine).